The chain runs to 87 residues: Protein anon-73B1 (87 aa).

A helical membrane pass occupies residues 25 to 47; that stretch reads LLIRYGLYVGALFQFVCISAAVL. The segment at 51–87 is disordered; it reads NPDGQSNPESGEVTEREGEPVRTRLHKIRKLEKKKRR. Residues 63–72 are compositionally biased toward basic and acidic residues; that stretch reads VTEREGEPVR. Positions 73-87 are enriched in basic residues; that stretch reads TRLHKIRKLEKKKRR.

It belongs to the UPF0239 family.

The protein resides in the membrane. This Drosophila melanogaster (Fruit fly) protein is Protein anon-73B1 (anon-73B1).